The primary structure comprises 937 residues: FNIP repeat-containing protein DDB_G0271996 (937 aa).

Positions 1–12 (MQQPISIQQPVV) are enriched in polar residues. Residues 1 to 60 (MQQPISIQQPVVNNINNSPNNQANINNNTTNNTNNNNNNNNTTNNIANNNNSNNINNNNE) form a disordered region. Residues 13–60 (NNINNSPNNQANINNNTTNNTNNNNNNNNTTNNIANNNNSNNINNNNE) are compositionally biased toward low complexity. FNIP repeat units follow at residues 307–350 (FNQP…LGQR), 354–394 (PIPI…TLDN), 396–439 (FNQP…FHQN), and 598–640 (YNHQ…RVKS). Residues 677 to 769 (VEQQAQYAQQ…EEEDTNNHQH (93 aa)) adopt a coiled-coil conformation. The segment covering 719–729 (KQQQQQQQDNE) has biased composition (low complexity). Disordered stretches follow at residues 719 to 767 (KQQQ…TNNH), 794 to 823 (SNNS…EEED), and 910 to 937 (QNQN…NVKK). The segment covering 751-763 (LEEEQENEEEEED) has biased composition (acidic residues). 2 stretches are compositionally biased toward low complexity: residues 794–814 (SNNS…NNNS) and 910–929 (QNQN…NNNN). Residues 902-937 (ICNNINQNQNQNNNNYNNNNNNNNNNNNNKKKNVKK) are a coiled coil.

This is FNIP repeat-containing protein DDB_G0271996 from Dictyostelium discoideum (Social amoeba).